A 318-amino-acid chain; its full sequence is NADH-ubiquinone oxidoreductase chain 1 (318 aa).

Transmembrane regions (helical) follow at residues 2–22, 68–88, 100–120, 146–166, 171–191, 222–242, 253–273, and 293–313; these read FMIN…FLTL, ISMF…MWTP, LGVL…LWSG, LAII…PTLI, HMWL…STLA, LFFL…TILF, ELYT…FLWV, and FLPL…ITAG.

Belongs to the complex I subunit 1 family. As to quaternary structure, core subunit of respiratory chain NADH dehydrogenase (Complex I) which is composed of 45 different subunits.

It is found in the mitochondrion inner membrane. The catalysed reaction is a ubiquinone + NADH + 5 H(+)(in) = a ubiquinol + NAD(+) + 4 H(+)(out). Its function is as follows. Core subunit of the mitochondrial membrane respiratory chain NADH dehydrogenase (Complex I) which catalyzes electron transfer from NADH through the respiratory chain, using ubiquinone as an electron acceptor. Essential for the catalytic activity and assembly of complex I. The protein is NADH-ubiquinone oxidoreductase chain 1 (MT-ND1) of Hipposideros diadema (Diadem leaf-nosed bat).